Reading from the N-terminus, the 157-residue chain is Crossover junction endodeoxyribonuclease RuvC (157 aa).

Active-site residues include D7, E66, and D139. 3 residues coordinate Mg(2+): D7, E66, and D139.

Belongs to the RuvC family. Homodimer which binds Holliday junction (HJ) DNA. The HJ becomes 2-fold symmetrical on binding to RuvC with unstacked arms; it has a different conformation from HJ DNA in complex with RuvA. In the full resolvosome a probable DNA-RuvA(4)-RuvB(12)-RuvC(2) complex forms which resolves the HJ. Mg(2+) serves as cofactor.

It is found in the cytoplasm. The catalysed reaction is Endonucleolytic cleavage at a junction such as a reciprocal single-stranded crossover between two homologous DNA duplexes (Holliday junction).. Functionally, the RuvA-RuvB-RuvC complex processes Holliday junction (HJ) DNA during genetic recombination and DNA repair. Endonuclease that resolves HJ intermediates. Cleaves cruciform DNA by making single-stranded nicks across the HJ at symmetrical positions within the homologous arms, yielding a 5'-phosphate and a 3'-hydroxyl group; requires a central core of homology in the junction. The consensus cleavage sequence is 5'-(A/T)TT(C/G)-3'. Cleavage occurs on the 3'-side of the TT dinucleotide at the point of strand exchange. HJ branch migration catalyzed by RuvA-RuvB allows RuvC to scan DNA until it finds its consensus sequence, where it cleaves and resolves the cruciform DNA. This chain is Crossover junction endodeoxyribonuclease RuvC, found in Helicobacter pylori (strain J99 / ATCC 700824) (Campylobacter pylori J99).